We begin with the raw amino-acid sequence, 283 residues long: Bifunctional protein FolD (283 aa).

Residues 165–167 (GRS), serine 190, and valine 231 each bind NADP(+).

The protein belongs to the tetrahydrofolate dehydrogenase/cyclohydrolase family. In terms of assembly, homodimer. Interacts with BrxC.

It carries out the reaction (6R)-5,10-methylene-5,6,7,8-tetrahydrofolate + NADP(+) = (6R)-5,10-methenyltetrahydrofolate + NADPH. The catalysed reaction is (6R)-5,10-methenyltetrahydrofolate + H2O = (6R)-10-formyltetrahydrofolate + H(+). It functions in the pathway one-carbon metabolism; tetrahydrofolate interconversion. Catalyzes the oxidation of 5,10-methylenetetrahydrofolate to 5,10-methenyltetrahydrofolate and then the hydrolysis of 5,10-methenyltetrahydrofolate to 10-formyltetrahydrofolate. The polypeptide is Bifunctional protein FolD (Bacillus subtilis (strain 168)).